Consider the following 435-residue polypeptide: Ornithine decarboxylase (435 aa).

Residue Lys-98 is modified to N6-(pyridoxal phosphate)lysine. Residues Ser-230, Gly-268, and Glu-301–Arg-304 each bind pyridoxal 5'-phosphate. Substrate is bound at residue Tyr-344 to Asp-345. Catalysis depends on Cys-380, which acts as the Proton donor; shared with dimeric partner. Position 381 (Asp-381) interacts with substrate. Pyridoxal 5'-phosphate is bound at residue Tyr-409.

This sequence belongs to the Orn/Lys/Arg decarboxylase class-II family. In terms of assembly, homodimer. Only the dimer is catalytically active, as the active sites are constructed of residues from both monomers. Pyridoxal 5'-phosphate serves as cofactor.

The catalysed reaction is L-ornithine + H(+) = putrescine + CO2. It functions in the pathway amine and polyamine biosynthesis; putrescine biosynthesis via L-ornithine pathway; putrescine from L-ornithine: step 1/1. With respect to regulation, inhibited by antizyme (AZ) in response to polyamine levels. AZ inhibits the assembly of the functional homodimer by binding to ODC monomers and targeting them for ubiquitin-independent proteolytic destruction by the 26S proteasome. Catalyzes the first and rate-limiting step of polyamine biosynthesis that converts ornithine into putrescine, which is the precursor for the polyamines, spermidine and spermine. Polyamines are essential for cell proliferation and are implicated in cellular processes, ranging from DNA replication to apoptosis. This Capsicum annuum (Capsicum pepper) protein is Ornithine decarboxylase (ODC).